We begin with the raw amino-acid sequence, 85 residues long: Large ribosomal subunit protein bL27 (85 aa).

The disordered stretch occupies residues 1-21 (MAHKKGQGSTQNNRDSAGRRL).

It belongs to the bacterial ribosomal protein bL27 family.

The polypeptide is Large ribosomal subunit protein bL27 (Nitratiruptor sp. (strain SB155-2)).